The sequence spans 231 residues: Nucleoside diphosphate kinase II, chloroplastic (231 aa).

A chloroplast-targeting transit peptide spans 1 to 62 (MVGATVVSKW…RNSASRRRLR (62 aa)). Residues Lys91, Phe139, Arg167, Thr173, Arg184, and Asn194 each contribute to the ATP site. His197 functions as the Pros-phosphohistidine intermediate in the catalytic mechanism.

This sequence belongs to the NDK family. As to quaternary structure, interacts with PHYA, MPK3 and MPK6. The cofactor is Mg(2+). In terms of processing, autophosphorylated.

It is found in the plastid. The protein resides in the chloroplast. The enzyme catalyses a 2'-deoxyribonucleoside 5'-diphosphate + ATP = a 2'-deoxyribonucleoside 5'-triphosphate + ADP. The catalysed reaction is a ribonucleoside 5'-diphosphate + ATP = a ribonucleoside 5'-triphosphate + ADP. Functionally, major role in the synthesis of nucleoside triphosphates other than ATP. The ATP gamma phosphate is transferred to the NDP beta phosphate via a ping-pong mechanism, using a phosphorylated active-site intermediate. May activate MPK3 and MPK6. May be involved in the regulation of cellular redox state and hydrogen peroxide-mediated MAP kinase signaling. The sequence is that of Nucleoside diphosphate kinase II, chloroplastic (NDPK2) from Arabidopsis thaliana (Mouse-ear cress).